A 39-amino-acid chain; its full sequence is Anthranilate phosphoribosyltransferase (39 aa).

It belongs to the anthranilate phosphoribosyltransferase family. As to quaternary structure, homodimer.

The catalysed reaction is N-(5-phospho-beta-D-ribosyl)anthranilate + diphosphate = 5-phospho-alpha-D-ribose 1-diphosphate + anthranilate. Its pathway is amino-acid biosynthesis; L-tryptophan biosynthesis; L-tryptophan from chorismate: step 2/5. Its function is as follows. Catalyzes the transfer of the phosphoribosyl group of 5-phosphorylribose-1-pyrophosphate (PRPP) to anthranilate to yield N-(5'-phosphoribosyl)-anthranilate (PRA). The sequence is that of Anthranilate phosphoribosyltransferase (trpD) from Pectobacterium carotovorum (Erwinia carotovora).